Here is a 399-residue protein sequence, read N- to C-terminus: CCA-adding enzyme (399 aa).

ATP contacts are provided by Gly32 and Arg35. Gly32 and Arg35 together coordinate CTP. The Mg(2+) site is built by Asp45 and Asp47. Residues Arg116, Asp159, Arg162, Arg165, and Arg168 each contribute to the ATP site. Residues Arg116, Asp159, Arg162, Arg165, and Arg168 each contribute to the CTP site.

Belongs to the tRNA nucleotidyltransferase/poly(A) polymerase family. Bacterial CCA-adding enzyme type 3 subfamily. Homodimer. Mg(2+) is required as a cofactor.

The enzyme catalyses a tRNA precursor + 2 CTP + ATP = a tRNA with a 3' CCA end + 3 diphosphate. It catalyses the reaction a tRNA with a 3' CCA end + 2 CTP + ATP = a tRNA with a 3' CCACCA end + 3 diphosphate. Catalyzes the addition and repair of the essential 3'-terminal CCA sequence in tRNAs without using a nucleic acid template. Adds these three nucleotides in the order of C, C, and A to the tRNA nucleotide-73, using CTP and ATP as substrates and producing inorganic pyrophosphate. tRNA 3'-terminal CCA addition is required both for tRNA processing and repair. Also involved in tRNA surveillance by mediating tandem CCA addition to generate a CCACCA at the 3' terminus of unstable tRNAs. While stable tRNAs receive only 3'-terminal CCA, unstable tRNAs are marked with CCACCA and rapidly degraded. The chain is CCA-adding enzyme from Streptococcus sanguinis (strain SK36).